A 369-amino-acid polypeptide reads, in one-letter code: 3-isopropylmalate dehydrogenase (369 aa).

Residue 77 to 90 participates in NAD(+) binding; it reads GPKWDDLPFDKKPE. Residues Arg97, Arg107, Arg135, and Asp226 each contribute to the substrate site. The Mg(2+) site is built by Asp226, Asp250, and Asp254. 289 to 301 provides a ligand contact to NAD(+); that stretch reads GSAPDIAGKDMAN.

It belongs to the isocitrate and isopropylmalate dehydrogenases family. LeuB type 1 subfamily. Homodimer. It depends on Mg(2+) as a cofactor. Requires Mn(2+) as cofactor.

It is found in the cytoplasm. The catalysed reaction is (2R,3S)-3-isopropylmalate + NAD(+) = 4-methyl-2-oxopentanoate + CO2 + NADH. It functions in the pathway amino-acid biosynthesis; L-leucine biosynthesis; L-leucine from 3-methyl-2-oxobutanoate: step 3/4. Catalyzes the oxidation of 3-carboxy-2-hydroxy-4-methylpentanoate (3-isopropylmalate) to 3-carboxy-4-methyl-2-oxopentanoate. The product decarboxylates to 4-methyl-2 oxopentanoate. This chain is 3-isopropylmalate dehydrogenase, found in Paramagnetospirillum magneticum (strain ATCC 700264 / AMB-1) (Magnetospirillum magneticum).